We begin with the raw amino-acid sequence, 326 residues long: ELMO domain-containing protein 1 (326 aa).

An ELMO domain is found at 133 to 306 (QHEEMLLKLW…KFRKRIIKQL (174 aa)).

Acts as a GTPase-activating protein (GAP) toward guanine nucleotide exchange factors like ARL2, ARL3, ARF1 and ARF6, but not for GTPases outside the Arf family. This Bos taurus (Bovine) protein is ELMO domain-containing protein 1 (ELMOD1).